The sequence spans 230 residues: Thioredoxin domain-containing protein PLP3A (230 aa).

In terms of domain architecture, Thioredoxin spans 89-173; it reads VSEGDFLGEV…GVAMDRLVGF (85 aa). The disordered stretch occupies residues 197-230; sequence LSKKKKEEDDEDAEYQESIRRSVRSSENLDSDSD.

Belongs to the phosducin family. In terms of assembly, interacts with TUBB2, TUBB3, TUBB4 and TUBB5. In terms of tissue distribution, expressed in embryos, shoot meristems, leaf primordia, root meristems, floral meristems and young floral buds.

The protein resides in the cytoplasm. It is found in the nucleus. Functionally, tubulin-binding protein involved in microtubule formation. This Arabidopsis thaliana (Mouse-ear cress) protein is Thioredoxin domain-containing protein PLP3A (PLP3A).